The primary structure comprises 332 residues: RING-H2 finger protein ATL81 (332 aa).

An N-terminal signal peptide occupies residues 1–19 (MYDLTFLLISLFPIDITLP). The helical transmembrane segment at 76 to 96 (IVLTGSLLFIIFTGFFSFFFC) threads the bilayer. The segment at 154–196 (CSICLTEFMDDDTIRLISTCNHSFHTICIDLWFEGHKTCPVCR) adopts an RING-type; atypical zinc-finger fold.

This sequence belongs to the RING-type zinc finger family. ATL subfamily.

It is found in the membrane. The enzyme catalyses S-ubiquitinyl-[E2 ubiquitin-conjugating enzyme]-L-cysteine + [acceptor protein]-L-lysine = [E2 ubiquitin-conjugating enzyme]-L-cysteine + N(6)-ubiquitinyl-[acceptor protein]-L-lysine.. The protein operates within protein modification; protein ubiquitination. The sequence is that of RING-H2 finger protein ATL81 (ATL81) from Arabidopsis thaliana (Mouse-ear cress).